Here is a 459-residue protein sequence, read N- to C-terminus: Cyclic GMP-AMP synthase-like receptor 2 (459 aa).

ATP is bound by residues S68 and 79 to 81 (EFD). Mg(2+)-binding residues include E79, D81, and D199. Residues D199 and 248–255 (RSSFYAVE) each bind GTP. 252–255 (YAVE) is an ATP binding site. H263 contributes to the Zn(2+) binding site. ATP-binding positions include K274 and 288-292 (SYYIK).

The protein belongs to the mab-21 family. It depends on Mg(2+) as a cofactor. Requires Mn(2+) as cofactor.

The catalysed reaction is GTP + ATP = 3',2'-cGAMP + 2 diphosphate. It catalyses the reaction GTP + ATP = 2',3'-cGAMP + 2 diphosphate. It carries out the reaction GTP + ATP = pppGp(2'-5')A + diphosphate. The enzyme catalyses pppA(2'-5')pG = 3',2'-cGAMP + diphosphate. The catalysed reaction is pppGp(2'-5')A = 2',3'-cGAMP + diphosphate. The enzyme activity is specifically activated by some nucleic acid. Nucleotidyltransferase that catalyzes the formation of cyclic GMP-AMP from ATP and GTP and plays a key role in antiviral innate immunity. Directly binds some unknown nucleic acid, activating the nucleotidyltransferase activity, leading to synthesis of both 3',2'-cGAMP and 2',3'-cGAMP second messengers. 3',2'-cGAMP and 2',3'-cGAMP bind to and activate Sting, thereby triggering the antiviral immune response via activation of the NF-kappa-B transcription factor Rel (Relish). This Drosophila melanogaster (Fruit fly) protein is Cyclic GMP-AMP synthase-like receptor 2.